The chain runs to 507 residues: uncharacterized protein (507 aa).

3 disordered regions span residues Asn-91–Leu-162, Glu-174–Gln-255, and Lys-309–Thr-422. The segment covering Asp-116 to Glu-143 has biased composition (acidic residues). The segment covering Asn-144–Ser-155 has biased composition (low complexity). A compositionally biased stretch (basic and acidic residues) spans Glu-174 to Pro-193. 3 stretches are compositionally biased toward low complexity: residues Gln-194–Glu-236, Pro-243–Gln-255, and Gln-313–Pro-350. The segment covering Leu-351–Lys-360 has biased composition (basic residues). Positions Asn-378–Asp-409 are enriched in low complexity.

This is an uncharacterized protein from Dictyostelium discoideum (Social amoeba).